The following is a 124-amino-acid chain: Probable S-adenosyl-L-methionine-binding protein VNG_1115H (124 aa).

The region spanning 3 to 124 is the TsaA-like domain; sequence ATPIGYADTR…PVLDLKPALD (122 aa). S-adenosyl-L-methionine-binding positions include 20–22, 58–59, arginine 78, and 111–114; these read PRQ, DD, and AHGS.

The protein belongs to the tRNA methyltransferase O family.

This Halobacterium salinarum (strain ATCC 700922 / JCM 11081 / NRC-1) (Halobacterium halobium) protein is Probable S-adenosyl-L-methionine-binding protein VNG_1115H.